Consider the following 615-residue polypeptide: Chromosomal replication initiator protein DnaA (615 aa).

A domain I, interacts with DnaA modulators region spans residues 1-88 (MSEGQINLAM…RVAVTVDPSA (88 aa)). The interval 85–272 (DPSAVPPSAP…PTSGGPDQLN (188 aa)) is disordered. The segment at 88-269 (AVPPSAPTEE…STNPTSGGPD (182 aa)) is domain II. Low complexity-rich tracts occupy residues 94 to 112 (PTEEASSTSSPDSSHPAPD) and 173 to 190 (PSSADPGSPASPAPVAES). The interval 270 to 486 (QLNPKYTFDT…GALIRVTAFA (217 aa)) is domain III, AAA+ region. ATP contacts are provided by glycine 314, glycine 316, lysine 317, and threonine 318. Residues 487-615 (SLNRQSVDLH…QQAHHNHHHL (129 aa)) are domain IV, binds dsDNA.

It belongs to the DnaA family. In terms of assembly, oligomerizes as a right-handed, spiral filament on DNA at oriC.

The protein localises to the cytoplasm. In terms of biological role, plays an essential role in the initiation and regulation of chromosomal replication. ATP-DnaA binds to the origin of replication (oriC) to initiate formation of the DNA replication initiation complex once per cell cycle. Binds the DnaA box (a 9 base pair repeat at the origin) and separates the double-stranded (ds)DNA. Forms a right-handed helical filament on oriC DNA; dsDNA binds to the exterior of the filament while single-stranded (ss)DNA is stabiized in the filament's interior. The ATP-DnaA-oriC complex binds and stabilizes one strand of the AT-rich DNA unwinding element (DUE), permitting loading of DNA polymerase. After initiation quickly degrades to an ADP-DnaA complex that is not apt for DNA replication. Binds acidic phospholipids. The polypeptide is Chromosomal replication initiator protein DnaA (Thermobifida fusca (strain YX)).